A 270-amino-acid polypeptide reads, in one-letter code: Thymidine kinase 2, mitochondrial (270 aa).

Residues 1 to 38 (MLLRSLRSWAARSPRSVGPGSSGSPGSLDSGAGPLWAP) constitute a mitochondrion transit peptide. The segment at 1–54 (MLLRSLRSWAARSPRSVGPGSSGSPGSLDSGAGPLWAPRRAWPPDKDRENDKEK) is disordered. Residues 13–34 (SPRSVGPGSSGSPGSLDSGAGP) are compositionally biased toward low complexity. The segment covering 42–54 (WPPDKDRENDKEK) has biased composition (basic and acidic residues). 62–70 (GNIASGKTT) lines the ATP pocket. Glutamate 138 functions as the Proton acceptor in the catalytic mechanism.

This sequence belongs to the DCK/DGK family. In terms of assembly, homodimer. Found in most tissues; highly expressed in liver.

The protein resides in the mitochondrion. It carries out the reaction thymidine + ATP = dTMP + ADP + H(+). The catalysed reaction is 2'-deoxycytidine + ATP = dCMP + ADP + H(+). It catalyses the reaction 2'-deoxyuridine + ATP = dUMP + ADP + H(+). Phosphorylates thymidine, deoxycytidine, and deoxyuridine in the mitochondrial matrix. In non-replicating cells, where cytosolic dNTP synthesis is down-regulated, mtDNA synthesis depends solely on TK2 and DGUOK. The chain is Thymidine kinase 2, mitochondrial (Tk2) from Mus musculus (Mouse).